We begin with the raw amino-acid sequence, 505 residues long: ATP synthase subunit alpha (505 aa).

170–177 (GDRQTGKT) is a binding site for ATP.

The protein belongs to the ATPase alpha/beta chains family. As to quaternary structure, F-type ATPases have 2 components, CF(1) - the catalytic core - and CF(0) - the membrane proton channel. CF(1) has five subunits: alpha(3), beta(3), gamma(1), delta(1), epsilon(1). CF(0) has four main subunits: a(1), b(1), b'(1) and c(9-12).

It is found in the cellular thylakoid membrane. It carries out the reaction ATP + H2O + 4 H(+)(in) = ADP + phosphate + 5 H(+)(out). Its function is as follows. Produces ATP from ADP in the presence of a proton gradient across the membrane. The alpha chain is a regulatory subunit. This chain is ATP synthase subunit alpha, found in Prochlorococcus marinus (strain MIT 9515).